Consider the following 297-residue polypeptide: HTH-type transcriptional regulator ArgP (297 aa).

The HTH lysR-type domain maps to 4-60 (PDYRTLQALDAVIRERGFERAAQKLCITQSAVSQRIKQLENMFGQPLLVRTVPPRPT). Positions 21 to 40 (FERAAQKLCITQSAVSQRIK) form a DNA-binding region, H-T-H motif.

The protein belongs to the LysR transcriptional regulatory family. As to quaternary structure, homodimer.

In terms of biological role, controls the transcription of genes involved in arginine and lysine metabolism. The chain is HTH-type transcriptional regulator ArgP from Citrobacter koseri (strain ATCC BAA-895 / CDC 4225-83 / SGSC4696).